We begin with the raw amino-acid sequence, 143 residues long: MSLTAKDKSLITGFWQKISSKADDLGAEALSRMIVVFPATKVYFSHWPDLGPGSPSVKKHGKVIMAAVGDAVGKMNDLVGALSALSDLHAFKMRIDPGNFKTLSHNILVACAVNFPVDFTAEVHVAMDKFLAALGAALSDKYR.

N-acetylserine is present on Ser2. The Globin domain maps to 2 to 143 (SLTAKDKSLI…LGAALSDKYR (142 aa)). An O2-binding site is contributed by His60. His89 is a heme b binding site.

Belongs to the globin family. In terms of assembly, heterotetramer of two alpha chains and two beta chains. In terms of tissue distribution, red blood cells.

Functionally, involved in oxygen transport from gills to the various peripheral tissues. In Anguilla anguilla (European freshwater eel), this protein is Hemoglobin cathodic subunit alpha.